A 378-amino-acid polypeptide reads, in one-letter code: Heme chaperone HemW (378 aa).

The 237-residue stretch at 1 to 237 (MVKLPPLSLY…LTAAGYQQYE (237 aa)) folds into the Radical SAM core domain. Tyrosine 10 contacts S-adenosyl-L-methionine. [4Fe-4S] cluster-binding residues include cysteine 16, cysteine 20, and cysteine 23. Residues glycine 66, 67–68 (GT), glutamate 99, glutamine 126, arginine 138, and aspartate 163 each bind S-adenosyl-L-methionine.

The protein belongs to the anaerobic coproporphyrinogen-III oxidase family. HemW subfamily. In terms of assembly, binding of the [4Fe-4S] cofactor promotes dimerization. It depends on [4Fe-4S] cluster as a cofactor.

It localises to the cytoplasm. Probably acts as a heme chaperone, transferring heme to the NarI subunit of the respiratory enzyme nitrate reductase; transfer may be stimulated by NADH. Binds one molecule of heme per monomer, possibly covalently. Heme binding is not affected by either [4Fe-4S] or S-adenosyl-L-methionine (SAM)-binding. Does not have coproporphyrinogen III dehydrogenase activity in vitro. Binds 1 [4Fe-4S] cluster. The cluster is coordinated with 3 cysteines and an exchangeable S-adenosyl-L-methionine. This is Heme chaperone HemW from Escherichia coli (strain K12).